Consider the following 195-residue polypeptide: Molybdenum cofactor guanylyltransferase (195 aa).

GTP-binding positions include L10 to G12, K23, N51, D69, and D99. Mg(2+) is bound at residue D99.

This sequence belongs to the MobA family. In terms of assembly, monomer. The cofactor is Mg(2+).

It localises to the cytoplasm. It carries out the reaction Mo-molybdopterin + GTP + H(+) = Mo-molybdopterin guanine dinucleotide + diphosphate. Its function is as follows. Transfers a GMP moiety from GTP to Mo-molybdopterin (Mo-MPT) cofactor (Moco or molybdenum cofactor) to form Mo-molybdopterin guanine dinucleotide (Mo-MGD) cofactor. The protein is Molybdenum cofactor guanylyltransferase of Shewanella putrefaciens (strain CN-32 / ATCC BAA-453).